The chain runs to 269 residues: Glutamate racemase (269 aa).

Residues 11-12 and 43-44 contribute to the substrate site; these read DS and YG. C74 acts as the Proton donor/acceptor in catalysis. 75–76 contributes to the substrate binding site; sequence NT. Catalysis depends on C185, which acts as the Proton donor/acceptor. A substrate-binding site is contributed by 186–187; sequence TH.

The protein belongs to the aspartate/glutamate racemases family.

It carries out the reaction L-glutamate = D-glutamate. Its pathway is cell wall biogenesis; peptidoglycan biosynthesis. Functionally, provides the (R)-glutamate required for cell wall biosynthesis. The polypeptide is Glutamate racemase (Bacillus cereus (strain ATCC 10987 / NRS 248)).